We begin with the raw amino-acid sequence, 287 residues long: Urease accessory protein UreD (287 aa).

Belongs to the UreD family. As to quaternary structure, ureD, UreF and UreG form a complex that acts as a GTP-hydrolysis-dependent molecular chaperone, activating the urease apoprotein by helping to assemble the nickel containing metallocenter of UreC. The UreE protein probably delivers the nickel.

The protein localises to the cytoplasm. Required for maturation of urease via the functional incorporation of the urease nickel metallocenter. In Ureaplasma parvum serovar 3 (strain ATCC 27815 / 27 / NCTC 11736), this protein is Urease accessory protein UreD.